The primary structure comprises 217 residues: Nitrile hydratase subunit beta (217 aa).

This sequence belongs to the nitrile hydratase subunit beta family. In terms of assembly, heterodimer of an alpha and a beta chain.

The enzyme catalyses an aliphatic primary amide = an aliphatic nitrile + H2O. NHase catalyzes the hydration of various nitrile compounds to the corresponding amides. This Pseudomonas putida (Arthrobacter siderocapsulatus) protein is Nitrile hydratase subunit beta (nthB).